Reading from the N-terminus, the 354-residue chain is CCN family member 3 (354 aa).

A signal peptide spans Met1–Ser21. Positions Ala25–Pro99 constitute an IGFBP N-terminal domain. 6 disulfides stabilise this stretch: Cys29–Cys55, Cys33–Cys57, Cys37–Cys58, Cys44–Cys61, Cys69–Cys83, and Cys75–Cys96. Asn91 carries an N-linked (GlcNAc...) asparagine glycan. The region spanning Asp102–Gly168 is the VWFC domain. In terms of domain architecture, TSP type-1 spans Asn202–Glu247. Residue Cys241 is the site of S-palmitoyl cysteine attachment. 5 disulfide bridges follow: Cys261-Cys298, Cys278-Cys312, Cys289-Cys328, Cys292-Cys330, and Cys297-Cys334. Positions Cys261 to Pro335 constitute a CTCK domain. Asn277 is a glycosylation site (N-linked (GlcNAc...) asparagine).

It belongs to the CCN family. In terms of assembly, interacts with FBLN1. Interacts (via CTCK domain) with NOTCH1 (via the EGF-like repeat region). Interacts with GJA1/CX43. Interacts with ITGA5:ITGB1, ITGAV:ITGB3 and ITGAV:ITGB5. Interacts with ZDHHC22; the interaction may lead to CCN3 palmitoylation. In terms of processing, may be palmitoylated on Cys-241, which is important for extracellular secretion. As to expression, expressed in large vessels including the ascending aorta, carotid arteries, and the thoracic aorta, in medium-sized vessels such as coronary arteries and small pulmonary veins and also in small vessels. In addition, also found to be present in the heart (at protein level). Expressed in astrocytes (at protein level). Detected in brain, bone, lung and muscle tissues. Expressed in skin, expression highly increases 5 days post-wounding, peaking on the 7th day to decline after 9 days. Expressed in pancreatic ducts and beta-cell islets. Expressed in the brain, in arcuate nucleus ESR1/KISS1 neurons, during lactation (at protein level).

It localises to the secreted. The protein localises to the cytoplasm. Its subcellular location is the cell junction. The protein resides in the gap junction. In terms of biological role, immediate-early protein playing a role in various cellular processes including proliferation, adhesion, migration, differentiation and survival. Acts by binding to integrins or membrane receptors such as NOTCH1. Essential regulator of hematopoietic stem and progenitor cell function. Inhibits myogenic differentiation through the activation of Notch-signaling pathway. Inhibits vascular smooth muscle cells proliferation by increasing expression of cell-cycle regulators such as CDKN2B or CDKN1A independently of TGFB1 signaling. Ligand of integrins ITGAV:ITGB3 and ITGA5:ITGB1, acts directly upon endothelial cells to stimulate pro-angiogenic activities and induces angiogenesis. In endothelial cells, supports cell adhesion, induces directed cell migration (chemotaxis) and promotes cell survival. Also plays a role in cutaneous wound healing acting as integrin receptor ligand. Supports skin fibroblast adhesion through ITGA5:ITGB1 and ITGA6:ITGB1 and induces fibroblast chemotaxis through ITGAV:ITGB5. Seems to enhance bFGF-induced DNA synthesis in fibroblasts. Involved in bone regeneration as a negative regulator. Enhances the articular chondrocytic phenotype, whereas it repressed the one representing endochondral ossification. Impairs pancreatic beta-cell function, inhibits beta-cell proliferation and insulin secretion. Plays a role as negative regulator of endothelial pro-inflammatory activation reducing monocyte adhesion, its anti-inflammatory effects occur secondary to the inhibition of NF-kappaB signaling pathway. Contributes to the control and coordination of inflammatory processes in atherosclerosis. Attenuates inflammatory pain through regulation of IL1B- and TNF-induced MMP9, MMP2 and CCL2 expression. Inhibits MMP9 expression through ITGB1 engagement. Brain osteoanabolic hormone. During lactation, maintains the maternal skeleton and viability of offspring. In this context, may act on osteochondral skeletal stem cells. The polypeptide is CCN family member 3 (Ccn3) (Mus musculus (Mouse)).